The chain runs to 406 residues: MMEGLDDGPDFLSEEDRGLKAINVDLQSDAALQVDISDALSERDKVKFTVHTKSSLPNFKQNEFSVVRQHEEFIWLHDSFVENEDYAGYIIPPAPPRPDFDASREKLQKLGEGEGSMTKEEFTKMKQELEAEYLAIFKKTVAMHEVFLCRVAAHPILRKDLNFHVFLEYNQDLSVRGKNKKEKLEDFFKNMVKSADGVIVSGVKDVDDFFEHERTFLLEYHNRVKDASAKSDRMTRSHKSAADDYNRIGSSLYALGTQDSTDICKFFLKVSELFDKTRKIEARVSADEDLKLSDLLKYYLRESQAAKDLLYRRSRSLVDYENANKALDKARAKNKDVLQAETSQQLCCQKFEKISESAKQELIDFKTRRVAAFRKNLVELAELELKHAKGNLQLLQNCLAVLNGDT.

Methionine 1 carries the post-translational modification N-acetylmethionine. Methionine 2 is modified (N-acetylmethionine; in Sorting nexin-6, N-terminally processed). The interval 2–179 (MEGLDDGPDF…NQDLSVRGKN (178 aa)) is interaction with PIM1. The region spanning 26–173 (LQSDAALQVD…HVFLEYNQDL (148 aa)) is the PX domain. A 1,2-diacyl-sn-glycero-3-phospho-(1D-myo-inositol-4,5-bisphosphate)-binding positions include 41 to 47 (SERDKVK), 100 to 106 (FDASREK), and 114 to 117 (EGSM). Residues serine 116 and serine 194 each carry the phosphoserine modification. The interval 182 to 199 (EKLEDFFKNMVKSADGVI) is membrane-binding amphipathic helix. The BAR domain maps to 203 to 406 (VKDVDDFFEH…NCLAVLNGDT (204 aa)).

Belongs to the sorting nexin family. Forms heterodimers with BAR domain-containing sorting nexins SNX1 and SNX2. The heterodimers are proposed to self-assemble into helical arrays on the membrane to stabilize and expand local membrane curvature underlying endosomal tubule formation. Thought to be a component of the originally described retromer complex (also called SNX-BAR retromer) which is a pentamer containing the heterotrimeric retromer cargo-selective complex (CSC), also described as vacuolar protein sorting subcomplex (VPS), and a heterodimeric membrane-deforming subcomplex formed between SNX1 or SNX2 and SNX5 or SNX6 (also called SNX-BAR subcomplex); the respective CSC and SNX-BAR subcomplexes associate with low affinity. Interacts with SNX1, SNX2, VPS26A, VPS29, VPS35, TGFB receptors, BACE1, BRMS1, PIP5K1C. Interacts with DCTN1; the association with DCTN1 is involved in movement of retromer-c ontaining vesicles toward the TGN. Interacts with PIM1; translocating SNX6 to the nucleus. Interacts with CDKN1B and GIT1. Post-translationally, in vitro phosphorylated by PIM1; not affecting PIM1-dependent nuclear translocation.

Its subcellular location is the early endosome membrane. It is found in the cytoplasmic vesicle. The protein localises to the cytoplasm. It localises to the nucleus. Functionally, involved in several stages of intracellular trafficking. Interacts with membranes phosphatidylinositol 3,4-bisphosphate and/or phosphatidylinositol 4,5-bisphosphate. Acts in part as component of the retromer membrane-deforming SNX-BAR subcomplex. The SNX-BAR retromer mediates retrograde transport of cargo proteins from endosomes to the trans-Golgi network (TGN) and is involved in endosome-to-plasma membrane transport for cargo protein recycling. The SNX-BAR subcomplex functions to deform the donor membrane into a tubular profile called endosome-to-TGN transport carrier (ETC). Does not have in vitro vesicle-to-membrane remodeling activity. Involved in retrograde endosome-to-TGN transport of lysosomal enzyme receptor IGF2R. May function as link between transport vesicles and dynactin. Negatively regulates retrograde transport of BACE1 from the cell surface to the trans-Golgi network. Involved in E-cadherin sorting and degradation; inhibits PIP5K1C-mediated E-cadherin degradation. In association with GIT1 involved in EGFR degradation. Promotes lysosomal degradation of CDKN1B. May contribute to transcription regulation. This chain is Sorting nexin-6 (SNX6), found in Pongo abelii (Sumatran orangutan).